A 514-amino-acid chain; its full sequence is Probable cytochrome P450 6w1 (514 aa).

Residue cysteine 450 participates in heme binding.

Belongs to the cytochrome P450 family. Heme is required as a cofactor.

It is found in the endoplasmic reticulum membrane. The protein localises to the microsome membrane. Functionally, may be involved in the metabolism of insect hormones and in the breakdown of synthetic insecticides. This chain is Probable cytochrome P450 6w1 (Cyp6w1), found in Drosophila melanogaster (Fruit fly).